The primary structure comprises 477 residues: PTS system glucose-specific EIICB component (477 aa).

The region spanning 1-388 (MFKNVFSSLQ…FNLKTPGREE (388 aa)) is the PTS EIIC type-1 domain. The next 9 helical transmembrane spans lie at 20-40 (VSVL…FTLI), 51-71 (TGGS…ALGF), 76-96 (GVAA…LSAV), 112-132 (NFSD…AYMF), 152-172 (FVPI…SLIW), 250-270 (LSGG…AIWH), 280-300 (IGSI…TEPI), 304-324 (FILV…LSFP), and 354-374 (IFLF…IFYF). Residues 399-477 (IEIAPYIVEA…TAIDEYINNI (79 aa)) enclose the PTS EIIB type-1 domain. Catalysis depends on Cys-421, which acts as the Phosphocysteine intermediate; for EIIB activity. Cys-421 is subject to Phosphocysteine.

It is found in the cell inner membrane. The enzyme catalyses N(pros)-phospho-L-histidyl-[protein] + D-glucose(out) = D-glucose 6-phosphate(in) + L-histidyl-[protein]. Its function is as follows. The phosphoenolpyruvate-dependent sugar phosphotransferase system (sugar PTS), a major carbohydrate active transport system, catalyzes the phosphorylation of incoming sugar substrates concomitantly with their translocation across the cell membrane. The enzyme II complex composed of PtsG and Crr is involved in glucose transport. In Buchnera aphidicola subsp. Schizaphis graminum (strain Sg), this protein is PTS system glucose-specific EIICB component (ptsG).